A 375-amino-acid chain; its full sequence is Queuine tRNA-ribosyltransferase (375 aa).

Catalysis depends on D90, which acts as the Proton acceptor. Substrate-binding positions include 90-94 (DSGGF), D144, Q190, and G217. An RNA binding region spans residues 248–254 (GIGTPHY). Residue D267 is the Nucleophile of the active site. The segment at 272–276 (ARITR) is RNA binding; important for wobble base 34 recognition. The Zn(2+) site is built by C305, C307, C310, and H336.

Belongs to the queuine tRNA-ribosyltransferase family. Homodimer. Within each dimer, one monomer is responsible for RNA recognition and catalysis, while the other monomer binds to the replacement base PreQ1. It depends on Zn(2+) as a cofactor.

It catalyses the reaction 7-aminomethyl-7-carbaguanine + guanosine(34) in tRNA = 7-aminomethyl-7-carbaguanosine(34) in tRNA + guanine. It participates in tRNA modification; tRNA-queuosine biosynthesis. Its function is as follows. Catalyzes the base-exchange of a guanine (G) residue with the queuine precursor 7-aminomethyl-7-deazaguanine (PreQ1) at position 34 (anticodon wobble position) in tRNAs with GU(N) anticodons (tRNA-Asp, -Asn, -His and -Tyr). Catalysis occurs through a double-displacement mechanism. The nucleophile active site attacks the C1' of nucleotide 34 to detach the guanine base from the RNA, forming a covalent enzyme-RNA intermediate. The proton acceptor active site deprotonates the incoming PreQ1, allowing a nucleophilic attack on the C1' of the ribose to form the product. After dissociation, two additional enzymatic reactions on the tRNA convert PreQ1 to queuine (Q), resulting in the hypermodified nucleoside queuosine (7-(((4,5-cis-dihydroxy-2-cyclopenten-1-yl)amino)methyl)-7-deazaguanosine). The chain is Queuine tRNA-ribosyltransferase from Borreliella burgdorferi (strain ZS7) (Borrelia burgdorferi).